We begin with the raw amino-acid sequence, 565 residues long: Arginine--tRNA ligase (565 aa).

The 'HIGH' region signature appears at 121–131 (PNIAKPMGMGH).

This sequence belongs to the class-I aminoacyl-tRNA synthetase family. In terms of assembly, monomer.

The protein localises to the cytoplasm. The catalysed reaction is tRNA(Arg) + L-arginine + ATP = L-arginyl-tRNA(Arg) + AMP + diphosphate. The chain is Arginine--tRNA ligase from Lactobacillus delbrueckii subsp. bulgaricus (strain ATCC BAA-365 / Lb-18).